The following is a 166-amino-acid chain: Deglycase PH1704 (166 aa).

Residues 1–166 (MKVLFLTANE…WMREFVKLLK (166 aa)) enclose the PfpI endopeptidase domain. Catalysis depends on cysteine 100, which acts as the Nucleophile. Histidine 101 is a catalytic residue.

The protein belongs to the peptidase C56 family. As to quaternary structure, homohexamer formed by a dimer of trimers that assemble into a hollow ring structure.

It is found in the cytoplasm. It carries out the reaction N(omega)-(1-hydroxy-2-oxopropyl)-L-arginyl-[protein] + H2O = lactate + L-arginyl-[protein] + H(+). The catalysed reaction is N(6)-(1-hydroxy-2-oxopropyl)-L-lysyl-[protein] + H2O = lactate + L-lysyl-[protein] + H(+). The enzyme catalyses S-(1-hydroxy-2-oxopropyl)-L-cysteinyl-[protein] + H2O = lactate + L-cysteinyl-[protein] + H(+). It catalyses the reaction N(omega)-(1-hydroxy-2-oxoethyl)-L-arginyl-[protein] + H2O = L-arginyl-[protein] + glycolate + H(+). It carries out the reaction N(6)-(1-hydroxy-2-oxoethyl)-L-lysyl-[protein] + H2O = glycolate + L-lysyl-[protein] + H(+). The catalysed reaction is S-(1-hydroxy-2-oxoethyl)-L-cysteinyl-[protein] + H2O = glycolate + L-cysteinyl-[protein] + H(+). Its function is as follows. Deglycase that catalyzes the deglycation of the Maillard adducts formed between amino groups of proteins and reactive carbonyl groups of glyoxals. Thus, functions as a protein deglycase that repairs methylglyoxal- and glyoxal-glycated proteins, and releases repaired proteins and lactate or glycolate, respectively. Deglycates cysteine, arginine and lysine residues in proteins, and thus reactivates these proteins by reversing glycation by glyoxals. Acts on early glycation intermediates (hemithioacetals and aminocarbinols), preventing the formation of advanced glycation endproducts (AGE) that cause irreversible damage. Also displays proteolytic activity. This Pyrococcus horikoshii (strain ATCC 700860 / DSM 12428 / JCM 9974 / NBRC 100139 / OT-3) protein is Deglycase PH1704.